Consider the following 200-residue polypeptide: MTKVRTKISLKIGANSRIPAQIASFNGLTSDKEHIAIIFGKADECSSSPIVRIHSECLTGDVFHSSRCDCGEQLDEAIELMEKEGGIIIYLRQEGRGIGLYNKIDAYKLQSEGMDTYQANNQLGFEDDLRDFTEAGQMLAALNIRKLQLLTNNPLKVKALREYGITVDKVISTSTFIKDDNESYLRTKAKNAGHAIRFPF.

52–56 (RIHSE) provides a ligand contact to GTP. Cys57, Cys68, and Cys70 together coordinate Zn(2+). GTP contacts are provided by residues Gln73, 94–96 (EGR), and Thr116. Asp128 serves as the catalytic Proton acceptor. Arg130 (nucleophile) is an active-site residue. Positions 151 and 156 each coordinate GTP.

It belongs to the GTP cyclohydrolase II family. It depends on Zn(2+) as a cofactor.

The enzyme catalyses GTP + 4 H2O = 2,5-diamino-6-hydroxy-4-(5-phosphoribosylamino)-pyrimidine + formate + 2 phosphate + 3 H(+). The protein operates within cofactor biosynthesis; riboflavin biosynthesis; 5-amino-6-(D-ribitylamino)uracil from GTP: step 1/4. Functionally, catalyzes the conversion of GTP to 2,5-diamino-6-ribosylamino-4(3H)-pyrimidinone 5'-phosphate (DARP), formate and pyrophosphate. The chain is GTP cyclohydrolase-2 from Psychromonas ingrahamii (strain DSM 17664 / CCUG 51855 / 37).